The sequence spans 526 residues: Cyclin-L1 (526 aa).

Positions 1 to 36 (MASGPHSTATAAAAASSAAPSAGGSSSGTTTTTTTT) are disordered. 2 cyclin-like regions span residues 88–190 (ELIQ…RVLK) and 203–287 (KIIV…ETLR). A disordered region spans residues 318–526 (KGLNPDGTPA…SRSGHGRHRR (209 aa)). Phosphothreonine is present on threonine 325. Residues serine 335 and serine 338 each carry the phosphoserine modification. Residues lysine 339 and lysine 347 each participate in a glycyl lysine isopeptide (Lys-Gly) (interchain with G-Cter in SUMO2) cross-link. The segment covering 342–352 (SPREVKAEEKS) has biased composition (basic and acidic residues). Phosphoserine is present on residues serine 352 and serine 355. Over residues 361-370 (VKKEPEDRQQ) the composition is skewed to basic and acidic residues. Lysine 362 is covalently cross-linked (Glycyl lysine isopeptide (Lys-Gly) (interchain with G-Cter in SUMO2)). Serine 374 is subject to Phosphoserine. Composition is skewed to basic residues over residues 382-418 (DSKR…RRSR), 438-452 (RRHH…KAKH), 460-476 (SNRH…RSQS), and 486-498 (KKHR…HRDR). Residues 390-432 (RSASRSRSRTRSRSRSHTPRRHYNNRRSRSGTYSSRSRSRSRS) are RS. The residue at position 445 (serine 445) is a Phosphoserine. A compositionally biased stretch (basic and acidic residues) spans 499 to 508 (RERSRSFERS). The span at 509–526 (HKSKHHGGSRSGHGRHRR) shows a compositional bias: basic residues.

Belongs to the cyclin family. Cyclin L subfamily. As to quaternary structure, (Microbial infection) Interacts with human herpes virus 1 (HHV-1) transcriptional regulator ICP22. In terms of assembly, interacts with POLR2A via its hyperphosphorylated C-terminal domain (CTD). Interacts with CDK11A, CDK12 and CDK13. Isoforms 1 and 2, but not isoform 3, interact with CDK11B. May form a ternary complex with CDK11B and casein kinase II (CKII). Interacts with pre-mRNA-splicing factors, including at least SRSF1, SRSF2 and SRSF7/SLU7. In terms of tissue distribution, widely expressed. Overexpression in primary tumors of head and neck squamous cell carcinomas (HNSCC).

The protein localises to the nucleus speckle. Its subcellular location is the nucleus. It localises to the nucleoplasm. Functionally, involved in pre-mRNA splicing. Functions in association with cyclin-dependent kinases (CDKs). Inhibited by the CDK-specific inhibitor CDKN1A/p21. May play a role in the regulation of RNA polymerase II (pol II). May be a candidate proto-oncogene in head and neck squamous cell carcinomas (HNSCC). The sequence is that of Cyclin-L1 (CCNL1) from Homo sapiens (Human).